Reading from the N-terminus, the 73-residue chain is Defensin-like protein 34 (73 aa).

The signal sequence occupies residues 1–25 (MASNKVSFFLVLCLCVLSTAEFGEA). Intrachain disulfides connect Cys-33/Cys-59, Cys-45/Cys-68, and Cys-49/Cys-70.

Belongs to the DEFL family.

It localises to the secreted. This chain is Defensin-like protein 34, found in Arabidopsis thaliana (Mouse-ear cress).